Here is a 459-residue protein sequence, read N- to C-terminus: Methylenetetrahydrofolate--tRNA-(uracil-5-)-methyltransferase TrmFO (459 aa).

11–16 (GAGLAG) lines the FAD pocket.

The protein belongs to the MnmG family. TrmFO subfamily. Requires FAD as cofactor.

Its subcellular location is the cytoplasm. The catalysed reaction is uridine(54) in tRNA + (6R)-5,10-methylene-5,6,7,8-tetrahydrofolate + NADH + H(+) = 5-methyluridine(54) in tRNA + (6S)-5,6,7,8-tetrahydrofolate + NAD(+). The enzyme catalyses uridine(54) in tRNA + (6R)-5,10-methylene-5,6,7,8-tetrahydrofolate + NADPH + H(+) = 5-methyluridine(54) in tRNA + (6S)-5,6,7,8-tetrahydrofolate + NADP(+). Functionally, catalyzes the folate-dependent formation of 5-methyl-uridine at position 54 (M-5-U54) in all tRNAs. The chain is Methylenetetrahydrofolate--tRNA-(uracil-5-)-methyltransferase TrmFO from Synechococcus sp. (strain CC9311).